The sequence spans 496 residues: Alpha-amylase (496 aa).

A disulfide bond links cysteine 29 and cysteine 85. 3 residues coordinate Ca(2+): asparagine 99, arginine 155, and aspartate 164. Arginine 192 contacts chloride. Catalysis depends on aspartate 194, which acts as the Nucleophile. Histidine 198 is a binding site for Ca(2+). Glutamate 230 functions as the Proton donor in the catalytic mechanism. Chloride is bound at residue arginine 332. Cystine bridges form between cysteine 374/cysteine 380 and cysteine 448/cysteine 460.

This sequence belongs to the glycosyl hydrolase 13 family. Monomer. It depends on Ca(2+) as a cofactor. The cofactor is chloride. In terms of processing, disulfide bonds are present.

It is found in the secreted. The enzyme catalyses Endohydrolysis of (1-&gt;4)-alpha-D-glucosidic linkages in polysaccharides containing three or more (1-&gt;4)-alpha-linked D-glucose units.. With respect to regulation, inhibited by alpha-amylase inhibitors from wheat and rye. The most effective inhibitors are the wheat tetrameric alpha-amylase inhibitor (WTAI) and the rye dimeric alpha-amylase inhibitor (RDAI-1). Not inhibited by alpha-amylase inhibitor from barley. Its function is as follows. Aids in the digestion of starch and glycogen derived from food, such as skin scales, fungi and bacteria. This is Alpha-amylase from Dermatophagoides pteronyssinus (European house dust mite).